Consider the following 138-residue polypeptide: Holo-[acyl-carrier-protein] synthase (138 aa).

Asp-8 and Glu-56 together coordinate Mg(2+).

The protein belongs to the P-Pant transferase superfamily. AcpS family. Mg(2+) is required as a cofactor.

The protein localises to the cytoplasm. It carries out the reaction apo-[ACP] + CoA = holo-[ACP] + adenosine 3',5'-bisphosphate + H(+). Functionally, transfers the 4'-phosphopantetheine moiety from coenzyme A to a Ser of acyl-carrier-protein. The sequence is that of Holo-[acyl-carrier-protein] synthase from Thermoanaerobacter pseudethanolicus (strain ATCC 33223 / 39E) (Clostridium thermohydrosulfuricum).